Here is a 466-residue protein sequence, read N- to C-terminus: Adenosylhomocysteinase (466 aa).

Residues T57, D132, and E192 each coordinate substrate. Residue 193-195 coordinates NAD(+); that stretch reads TTT. Residues K222 and D226 each coordinate substrate. NAD(+)-binding positions include N227, 256-261, E279, N314, 335-337, and N380; these read GYGDVG and IGH.

This sequence belongs to the adenosylhomocysteinase family. The cofactor is NAD(+).

It is found in the cytoplasm. The enzyme catalyses S-adenosyl-L-homocysteine + H2O = L-homocysteine + adenosine. The protein operates within amino-acid biosynthesis; L-homocysteine biosynthesis; L-homocysteine from S-adenosyl-L-homocysteine: step 1/1. Its function is as follows. May play a key role in the regulation of the intracellular concentration of adenosylhomocysteine. This Rhizobium etli (strain CIAT 652) protein is Adenosylhomocysteinase.